Reading from the N-terminus, the 198-residue chain is NADH-quinone oxidoreductase subunit I (198 aa).

2 4Fe-4S ferredoxin-type domains span residues 42–72 and 88–117; these read LNRW…VEGA and RVYE…MTND. [4Fe-4S] cluster contacts are provided by C52, C55, C58, C62, C97, C100, C103, and C107. The interval 137–198 is disordered; sequence APLKEGMEQP…DTQHKDEEAA (62 aa). A compositionally biased stretch (basic and acidic residues) spans 182 to 198; it reads AHRDDDNDTQHKDEEAA.

Belongs to the complex I 23 kDa subunit family. NDH-1 is composed of 14 different subunits. Subunits NuoA, H, J, K, L, M, N constitute the membrane sector of the complex. It depends on [4Fe-4S] cluster as a cofactor.

The protein resides in the cell membrane. The enzyme catalyses a quinone + NADH + 5 H(+)(in) = a quinol + NAD(+) + 4 H(+)(out). Its function is as follows. NDH-1 shuttles electrons from NADH, via FMN and iron-sulfur (Fe-S) centers, to quinones in the respiratory chain. The immediate electron acceptor for the enzyme in this species is believed to be ubiquinone. Couples the redox reaction to proton translocation (for every two electrons transferred, four hydrogen ions are translocated across the cytoplasmic membrane), and thus conserves the redox energy in a proton gradient. The protein is NADH-quinone oxidoreductase subunit I of Cutibacterium acnes (strain DSM 16379 / KPA171202) (Propionibacterium acnes).